Reading from the N-terminus, the 544-residue chain is Protein anon-37Cs (544 aa).

It localises to the cytoplasm. In terms of biological role, has a non-vital function. This is Protein anon-37Cs (anon-37Cs) from Drosophila lebanonensis (Fruit fly).